The following is a 351-amino-acid chain: Pinopsin (351 aa).

Over 1–30 (MSSNSSQAPPNGTPGPFDGPQWPYQAPQST) the chain is Extracellular. N-linked (GlcNAc...) asparagine glycosylation is present at Asn-4. A helical transmembrane segment spans residues 31-55 (YVGVAVLMGTVVACASVVNGLVIVV). Topologically, residues 56 to 67 (SICYKKLRSPLN) are cytoplasmic. A helical transmembrane segment spans residues 68–92 (YILVNLAVADLLVTLCGSSVSLSNN). Residues 93–107 (INGFFVFGRRMCELE) lie on the Extracellular side of the membrane. Residues Cys-104 and Cys-181 are joined by a disulfide bond. The chain crosses the membrane as a helical span at residues 108–127 (GFMVSLTGIVGLWSLAILAL). At 128-146 (ERYVVVCKPLGDFQFQRRH) the chain is on the cytoplasmic side. The chain crosses the membrane as a helical span at residues 147–170 (AVSGCAFTWGWALLWSAPPLLGWS). The Extracellular portion of the chain corresponds to 171-194 (SYVPEGLRTSCGPNWYTGGSNNNS). Asn-192 carries an N-linked (GlcNAc...) asparagine glycan. The chain crosses the membrane as a helical span at residues 195 to 222 (YILSLFVTCFVLPLSLILFSYTNLLLTL). Residues 223–244 (RAAAAQQKEADTTQRAEREVTR) are Cytoplasmic-facing. The chain crosses the membrane as a helical span at residues 245–268 (MVIVMVMAFLLCWLPYSTFALVVA). At 269 to 276 (THKGIIIQ) the chain is on the extracellular side. Residues 277-301 (PVLASLPSYFSKTATVYNPIIYVFM) traverse the membrane as a helical segment. The residue at position 288 (Lys-288) is an N6-(retinylidene)lysine. Residues 302 to 351 (NKQFQSCLLEMLCCGYQPQRTGKASPGTPGPHADVTAAGLRNKVMPAHPV) lie on the Cytoplasmic side of the membrane. S-palmitoyl cysteine attachment occurs at residues Cys-314 and Cys-315.

The protein belongs to the G-protein coupled receptor 1 family. Opsin subfamily. In terms of processing, phosphorylated on some or all of the serine and threonine residues present in the C-terminal region. Pineal gland.

It is found in the membrane. Produces a slow and prolonged phototransduction response consistent with the non-visual function of pineal photoreception. This chain is Pinopsin, found in Gallus gallus (Chicken).